A 452-amino-acid chain; its full sequence is Mitochondrial import inner membrane translocase subunit TIM50 (452 aa).

A mitochondrion-targeting transit peptide spans 1–23; that stretch reads MSLSKLTQTCFSRHQAKTFIRLY. At 24 to 167 the chain is on the mitochondrial matrix side; it reads SSDFKSLLGP…RRKRMERNTR (144 aa). Disordered regions lie at residues 96-115 and 130-153; these read IEAE…TSSA and ESAA…GNAE. The span at 131–144 shows a compositional bias: low complexity; that stretch reads SAASKSSSSSGGSS. Residues 168–188 traverse the membrane as a helical segment; the sequence is IGAYVLFGGSIIGFISFCFYY. The Mitochondrial intermembrane segment spans residues 189–452; sequence GRAQRDEFGN…LFGSRRHVNA (264 aa). The FCP1 homology domain maps to 243 to 387; the sequence is YLQPKYTIVI…VDLAELLKTI (145 aa).

This sequence belongs to the TIM50 family.

Its subcellular location is the mitochondrion inner membrane. Functionally, essential component of the TIM23 complex, a complex that mediates the translocation of transit peptide-containing proteins across the mitochondrial inner membrane. This chain is Mitochondrial import inner membrane translocase subunit TIM50 (scpl-4), found in Caenorhabditis elegans.